Consider the following 332-residue polypeptide: MGGVTFIGGGSFGTALAIMLAKKGHNVVIWDRNKEILEDINTLRTNTRYLPNNIIPCCVKAVDDIEKAAKESKYIVLAVPSFAIREVCRKIKGFLREDQIIISIAKGMEEETKKRLSEVVKEELYKNPVVVLSGPSHAEEVANDIPTTVVVTSTDMKYAEEVQDVFMTNSFRVYTNSDIVGVEIGGAVKNIIALASGIGDGIGYGDNTKAALMTRGMSEIMRIGVKLGGKPETFFGLTGMGDLIVTCTSMHSRNRKAGILIGRGMSCREACDKIGMVVEGVKACHTFYELKESLGVSMPITTSLYKVLFENGDPKKEVYELMARDKKNEYYF.

Residues S11, F12, R32, and K106 each coordinate NADPH. Sn-glycerol 3-phosphate-binding residues include K106, G134, and S136. An NADPH-binding site is contributed by A138. Residues K189, D242, S252, R253, and N254 each contribute to the sn-glycerol 3-phosphate site. Residue K189 is the Proton acceptor of the active site. R253 contributes to the NADPH binding site. V277 and E279 together coordinate NADPH.

This sequence belongs to the NAD-dependent glycerol-3-phosphate dehydrogenase family.

The protein resides in the cytoplasm. It catalyses the reaction sn-glycerol 3-phosphate + NAD(+) = dihydroxyacetone phosphate + NADH + H(+). The enzyme catalyses sn-glycerol 3-phosphate + NADP(+) = dihydroxyacetone phosphate + NADPH + H(+). It participates in membrane lipid metabolism; glycerophospholipid metabolism. Functionally, catalyzes the reduction of the glycolytic intermediate dihydroxyacetone phosphate (DHAP) to sn-glycerol 3-phosphate (G3P), the key precursor for phospholipid synthesis. The polypeptide is Glycerol-3-phosphate dehydrogenase [NAD(P)+] (Clostridium acetobutylicum (strain ATCC 824 / DSM 792 / JCM 1419 / IAM 19013 / LMG 5710 / NBRC 13948 / NRRL B-527 / VKM B-1787 / 2291 / W)).